We begin with the raw amino-acid sequence, 160 residues long: Cyclic pyranopterin monophosphate synthase (160 aa).

Substrate-binding positions include 77-79 (LCH) and 115-116 (ME). The active site involves aspartate 130.

This sequence belongs to the MoaC family. As to quaternary structure, homohexamer; trimer of dimers.

The catalysed reaction is (8S)-3',8-cyclo-7,8-dihydroguanosine 5'-triphosphate = cyclic pyranopterin phosphate + diphosphate. The protein operates within cofactor biosynthesis; molybdopterin biosynthesis. Catalyzes the conversion of (8S)-3',8-cyclo-7,8-dihydroguanosine 5'-triphosphate to cyclic pyranopterin monophosphate (cPMP). The sequence is that of Cyclic pyranopterin monophosphate synthase from Parvibaculum lavamentivorans (strain DS-1 / DSM 13023 / NCIMB 13966).